Consider the following 103-residue polypeptide: Large ribosomal subunit protein bL21 (103 aa).

It belongs to the bacterial ribosomal protein bL21 family. In terms of assembly, part of the 50S ribosomal subunit. Contacts protein L20.

This protein binds to 23S rRNA in the presence of protein L20. In Ectopseudomonas mendocina (strain ymp) (Pseudomonas mendocina), this protein is Large ribosomal subunit protein bL21.